A 116-amino-acid polypeptide reads, in one-letter code: Large ribosomal subunit protein uL18 (116 aa).

The protein belongs to the universal ribosomal protein uL18 family. As to quaternary structure, part of the 50S ribosomal subunit; part of the 5S rRNA/L5/L18/L25 subcomplex. Contacts the 5S and 23S rRNAs.

In terms of biological role, this is one of the proteins that bind and probably mediate the attachment of the 5S RNA into the large ribosomal subunit, where it forms part of the central protuberance. The protein is Large ribosomal subunit protein uL18 of Pseudoalteromonas translucida (strain TAC 125).